The primary structure comprises 474 residues: Catalase (474 aa).

Residues histidine 52 and asparagine 124 contribute to the active site. Residue tyrosine 334 participates in heme binding.

It belongs to the catalase family. It depends on heme as a cofactor.

The catalysed reaction is 2 H2O2 = O2 + 2 H2O. Its function is as follows. Decomposes hydrogen peroxide into water and oxygen; serves to protect cells from the toxic effects of hydrogen peroxide. The chain is Catalase (katA) from Campylobacter jejuni subsp. jejuni serotype O:2 (strain ATCC 700819 / NCTC 11168).